The sequence spans 261 residues: 5'-nucleotidase SurE (261 aa).

Residues aspartate 10, aspartate 11, serine 41, and asparagine 96 each coordinate a divalent metal cation.

Belongs to the SurE nucleotidase family. A divalent metal cation is required as a cofactor.

Its subcellular location is the cytoplasm. It catalyses the reaction a ribonucleoside 5'-phosphate + H2O = a ribonucleoside + phosphate. In terms of biological role, nucleotidase that shows phosphatase activity on nucleoside 5'-monophosphates. This is 5'-nucleotidase SurE from Methanococcoides burtonii (strain DSM 6242 / NBRC 107633 / OCM 468 / ACE-M).